The chain runs to 209 residues: Large ribosomal subunit protein uL3 (209 aa).

Residues 126–148 are disordered; the sequence is HGQSRGPMAHGSRYHRRPGSMGP.

It belongs to the universal ribosomal protein uL3 family. Part of the 50S ribosomal subunit. Forms a cluster with proteins L14 and L19.

Functionally, one of the primary rRNA binding proteins, it binds directly near the 3'-end of the 23S rRNA, where it nucleates assembly of the 50S subunit. This Listeria innocua serovar 6a (strain ATCC BAA-680 / CLIP 11262) protein is Large ribosomal subunit protein uL3.